A 662-amino-acid polypeptide reads, in one-letter code: Zinc finger protein 800 (662 aa).

The C2H2-type 1; degenerate zinc finger occupies 69 to 91 (FECKLCRSLFRGLPNLITHKKFY). K132 participates in a covalent cross-link: Glycyl lysine isopeptide (Lys-Gly) (interchain with G-Cter in SUMO2). Disordered stretches follow at residues 172-197 (ETSSEQLKAVPDADTEVEEAIEPPSI) and 205-224 (AAPTEEQPQESQADLETSDS). Over residues 205 to 216 (AAPTEEQPQESQ) the composition is skewed to low complexity. Residues 231 to 254 (LICCLCRKEFNSRRGVRRHIRKVH) form a C2H2-type 2 zinc finger. Residue K280 forms a Glycyl lysine isopeptide (Lys-Gly) (interchain with G-Cter in SUMO2) linkage. The C2H2-type 3 zinc-finger motif lies at 288-311 (RSCPVCCKSFATKANVRRHFDEVH). S318 carries the phosphoserine modification. The disordered stretch occupies residues 319–349 (ITPDIATKPGQPLFLDSASPKKSFKTRKQKS). The residue at position 320 (T320) is a Phosphothreonine. Position 337 is a phosphoserine (S337). Residues 340 to 349 (KSFKTRKQKS) show a composition bias toward basic residues. The segment at 357–382 (TACKCLLCKRKYSSQIMLKRHMQIVH) adopts a C2H2-type 4 zinc-finger fold. A disordered region spans residues 389–473 (ANSKREKGPN…AGGQQKTRKP (85 aa)). K392 is covalently cross-linked (Glycyl lysine isopeptide (Lys-Gly) (interchain with G-Cter in SUMO2)). The segment covering 414–434 (VESSPPSITHSPQNELKGTNH) has biased composition (polar residues). A phosphoserine mark is found at S420, S424, S453, S455, S458, and S460. The segment covering 456 to 468 (PKSASPSAAGGQQ) has biased composition (low complexity). Residue K474 forms a Glycyl lysine isopeptide (Lys-Gly) (interchain with G-Cter in SUMO2) linkage. 2 consecutive C2H2-type zinc fingers follow at residues 484–506 (LYCKLCKRQFTSKQNLTKHIELH) and 517–540 (YKCPLCTYETRRKRDVIRHITVVH). Disordered regions lie at residues 573–597 (RGPSREEAKHNDSKQDGTSNSPSKK) and 633–662 (HHKKTHKANATNSPEGNKTKGRSTRSKALV). Over residues 575-587 (PSREEAKHNDSKQ) the composition is skewed to basic and acidic residues. K597 participates in a covalent cross-link: Glycyl lysine isopeptide (Lys-Gly) (interchain with G-Cter in SUMO2). A C2H2-type 7 zinc finger spans residues 616 to 638 (HRCNKCGKAFAKKTYLEHHKKTH). The span at 651–662 (TKGRSTRSKALV) shows a compositional bias: basic residues.

This sequence belongs to the krueppel C2H2-type zinc-finger protein family.

It localises to the nucleus. Functionally, may be involved in transcriptional regulation. The protein is Zinc finger protein 800 (Znf800) of Mus musculus (Mouse).